The chain runs to 890 residues: Chloroquine resistance transporter (890 aa).

Disordered regions lie at residues 1-163 (MPPA…EAPL) and 280-300 (GMQRPCFGSPSTDTRMGAAEG). Topologically, residues 1–349 (MPPAHHGSGG…RATRWIDRNA (349 aa)) are cytoplasmic. Positions 8–19 (SGGRRRPGRGNK) are enriched in basic residues. 2 stretches are compositionally biased toward low complexity: residues 102-126 (APSQSDLPPSLSPTTASRPATSSRS) and 134-156 (SPVASSSAFSSPAPSASALTSAS). Residues 350 to 372 (ATVRVACYTFLLLVTSTGNTICF) form a helical membrane-spanning segment. At 373-391 (KKMIDKMPNYSPCLTQVTT) the chain is on the vacuolar side. A helical membrane pass occupies residues 392–412 (VVFVPVFFALSLYTDYAGGLP). Topologically, residues 413–422 (QEMADFPKRN) are cytoplasmic. Residues 423-443 (FAVMGFLDSFSGVMAIIGAVH) form a helical membrane-spanning segment. Topologically, residues 444–447 (TTGT) are vacuolar. Residues 448 to 468 (TQVVLQQSCIVFSLLASIVML) traverse the membrane as a helical segment. The Cytoplasmic segment spans residues 469 to 471 (RKR). Residues 472–492 (FHAAHYLGALVIILGVLVVKL) traverse the membrane as a helical segment. The Vacuolar segment spans residues 493–505 (PDLLHPSSDGGGD). A helical membrane pass occupies residues 506–526 (VFVFNLLYLLSNLPTAVSCVY). Over 527-544 (KEVAFRGVEMGTNYLQAW) the chain is Cytoplasmic. A helical transmembrane segment spans residues 545–565 (VALFQFLIGFLVLPLNALPVL). Residues 566–614 (GPQRVPLAELPASLWNGTRCLFGFNTIVTNCGGAGNMESPCDNCEGAWK) are Vacuolar-facing. A glycan (N-linked (GlcNAc...) asparagine) is linked at Asn581. Disulfide bonds link Cys585-Cys609 and Cys596-Cys606. Residues 615 to 634 (YVGMYLSFNLLYNMFIIFVV) traverse the membrane as a helical segment. The Cytoplasmic segment spans residues 635-640 (KSGGAA). Residues 641–663 (LTFLVSTLRLPVTALAFCSRAIM) traverse the membrane as a helical segment. The Vacuolar segment spans residues 664 to 673 (GDRAVPPKAT). The helical transmembrane segment at 674–694 (DFYGLLVLILGLVIYRAGGIM) threads the bilayer. Residues 695–890 (KRRAQRRAVA…GKSRANNGCI (196 aa)) are Cytoplasmic-facing. The segment at 798–871 (AAFTPFTQRM…NRVGGYEPPS (74 aa)) is disordered.

The protein belongs to the CRT-like transporter family.

The protein resides in the vacuole membrane. Functionally, nutrient transporter. Involved in maintaining the osmotic homeostasis of the digestive vacuole. Required for the proper organization of the endolysosomal system and, in turn, indirectly for microneme secretion and parasite invasion. Required for bradyzoite viability and cyst development. This Toxoplasma gondii protein is Chloroquine resistance transporter.